The primary structure comprises 85 residues: uncharacterized protein (85 aa).

This is an uncharacterized protein from Methanocaldococcus jannaschii (strain ATCC 43067 / DSM 2661 / JAL-1 / JCM 10045 / NBRC 100440) (Methanococcus jannaschii).